The primary structure comprises 757 residues: Glutathione biosynthesis bifunctional protein GshAB (757 aa).

The interval 1–337 is glutamate--cysteine ligase; that stretch reads MNIQQIVKEK…LGRARLGEVA (337 aa). The 264-residue stretch at 494 to 757 folds into the ATP-grasp domain; it reads KKVLAKAGFN…VLGMLFPELV (264 aa). 521 to 580 contributes to the ATP binding site; sequence PLFEGKAVVIKPKSTNFGLGISIFQQGVHDKADFAKAVEIAFREDKEVMVEDYLVGTEYR. Residues aspartate 702, glutamate 723, and asparagine 725 each coordinate Mg(2+). Residues aspartate 702, glutamate 723, and asparagine 725 each coordinate Mn(2+).

In the N-terminal section; belongs to the glutamate--cysteine ligase type 1 family. Type 2 subfamily. In terms of assembly, monomer. The cofactor is Mg(2+). Requires Mn(2+) as cofactor.

It catalyses the reaction L-cysteine + L-glutamate + ATP = gamma-L-glutamyl-L-cysteine + ADP + phosphate + H(+). The enzyme catalyses gamma-L-glutamyl-L-cysteine + glycine + ATP = glutathione + ADP + phosphate + H(+). It functions in the pathway sulfur metabolism; glutathione biosynthesis; glutathione from L-cysteine and L-glutamate: step 1/2. The protein operates within sulfur metabolism; glutathione biosynthesis; glutathione from L-cysteine and L-glutamate: step 2/2. In terms of biological role, synthesizes glutathione from L-glutamate and L-cysteine via gamma-L-glutamyl-L-cysteine. The polypeptide is Glutathione biosynthesis bifunctional protein GshAB (Mannheimia succiniciproducens (strain KCTC 0769BP / MBEL55E)).